A 114-amino-acid polypeptide reads, in one-letter code: Large ribosomal subunit protein P2 (114 aa).

A compositionally biased stretch (gly residues) spans 74–83; it reads AAAAGGGGGD. The disordered stretch occupies residues 74 to 114; that stretch reads AAAAGGGGGDAPAAAAEEPKKEEKSEEESDEELGFSLFDDN. A compositionally biased stretch (acidic residues) spans 98–114; the sequence is SEEESDEELGFSLFDDN.

It belongs to the eukaryotic ribosomal protein P1/P2 family. P1 and P2 exist as dimers at the large ribosomal subunit. In terms of processing, phosphorylated.

Functionally, plays an important role in the elongation step of protein synthesis. This is Large ribosomal subunit protein P2 from Parthenium argentatum (Guayule rubber plant).